The sequence spans 460 residues: Endoglucanase 2 (460 aa).

The signal sequence occupies residues 1 to 32 (MIKGSSLKRIKSLVMMAIFSVSIITTAIVSSA). The active-site Proton donor is Glu-99. Asp-155 acts as the Nucleophile in catalysis. Positions 400 to 460 (QQGLKGDVNN…FAQLKVKLLN (61 aa)) constitute a Dockerin domain.

This sequence belongs to the glycosyl hydrolase 8 (cellulase D) family.

It catalyses the reaction Endohydrolysis of (1-&gt;4)-beta-D-glucosidic linkages in cellulose, lichenin and cereal beta-D-glucans.. The sequence is that of Endoglucanase 2 (celB) from Ruminiclostridium josui (Clostridium josui).